Here is a 489-residue protein sequence, read N- to C-terminus: MALTKPDVDVLVVGGGLGGLSTALFLARRGARVLLVERHASTSVLPKAAGQNPRTMELFRFGGVADEILATDDIRGAQGDFTIKVVERVGGRVLHSFAESFEELVGATEQCTPMPWALAPQDRVEPVLVAHAAKHGAEIRFATELTSFQAGDDGVTARLRDLGTGAESTVSARYLVAADGPRSAIRESLGITRHGHGTLAHFMGVIFEADLTAVVPPGSTGWYYLQHPDFTGTFGPTDRPNRHTFYVATTPERGERPEDYTPQRCTELIRLAVDAPGLVPDILDIQAWDMAAYIADRWREGPVLLVGDAAKVTPPTGGMGGNTAIGDGFDVAWKLAAVLRGEAGERLLDSYGAERSLVSRLVVDESLAIYAQRMAPHLLGSVPEERGTAQVVLGFRYRSTAVAAEDDDPEPTEDPRRPSGRPGFRAPHVWIEQDGTRRSTVELFGDCWVLLAAPEGGAWPGRPPAPPRIWASASTSISSAAMSPPPPAN.

FAD-binding positions include 17–18 (LG), glutamate 37, glutamine 121, and leucine 145. The active-site Proton acceptor is tyrosine 224. Residue aspartate 308 participates in FAD binding. Glycine 317 is an aklavinone binding site. Disordered regions lie at residues 402-428 (VAAE…RAPH) and 455-489 (EGGA…PPAN). The span at 468-482 (RIWASASTSISSAAM) shows a compositional bias: low complexity.

This sequence belongs to the PheA/TfdB FAD monooxygenase family. Monomer. FAD serves as cofactor.

It carries out the reaction aklavinone + NADPH + O2 + H(+) = epsilon-rhodomycinone + NADP(+) + H2O. Its pathway is antibiotic biosynthesis; daunorubicin biosynthesis. It participates in antibiotic biosynthesis; carminomycin biosynthesis. The protein operates within antibiotic biosynthesis; rhodomycin biosynthesis. Involved in the biosynthesis of the anthracyclines carminomycin, rhodomycin and daunorubicin (daunomycin) which are aromatic polyketide antibiotics that exhibit high cytotoxicity and are widely applied in the chemotherapy of a variety of cancers. Catalyzes the incorporation of a hydroxyl group at position C-11 of aklavinone, resulting in epsilon-rhodomycinone. It cannot accept substrates glycosylated at position C-7. It can also hydroxylate 11-deoxycarminomycinone and can use both NAD or NADP. In Streptomyces peucetius, this protein is Aklavinone 12-hydroxylase DnrF (dnrF).